The primary structure comprises 285 residues: CCR4-NOT transcription complex subunit 7 (285 aa).

Residues Asp-40, Glu-42, Asp-161, Asp-230, and Glu-278 each contribute to the a divalent metal cation site.

This sequence belongs to the CAF1 family. In terms of assembly, component of the CCR4-NOT complex. Requires Mn(2+) as cofactor. It depends on Mg(2+) as a cofactor. The cofactor is Co(2+).

It localises to the nucleus. Its subcellular location is the cytoplasm. The catalysed reaction is Exonucleolytic cleavage of poly(A) to 5'-AMP.. Has 3'-5' poly(A) exoribonuclease activity for synthetic poly(A) RNA substrate. Catalytic component of the CCR4-NOT complex which is one of the major cellular mRNA deadenylases and is linked to various cellular processes including bulk mRNA degradation, miRNA-mediated repression, translational repression during translational initiation and general transcription regulation. During miRNA-mediated repression the complex also seems to act as translational repressor during translational initiation. Additional complex functions may be a consequence of its influence on mRNA expression. The protein is CCR4-NOT transcription complex subunit 7 (cnot7) of Xenopus tropicalis (Western clawed frog).